Here is a 506-residue protein sequence, read N- to C-terminus: 5-OH-xanthotoxin synthase (506 aa).

The chain crosses the membrane as a helical span at residues 3–23; that stretch reads PVVIFLVLAFPIASVYLLFYH. The segment at 365–370 is substrate specificity; that stretch reads TGPLLI. Cysteine 446 is a binding site for heme.

The protein belongs to the cytochrome P450 family. It depends on heme as a cofactor.

Its subcellular location is the microsome membrane. It carries out the reaction xanthotoxin + reduced [NADPH--hemoprotein reductase] + O2 = 5-hydroxyxanthotoxin + oxidized [NADPH--hemoprotein reductase] + H2O + 2 H(+). The protein operates within secondary metabolite biosynthesis. In terms of biological role, involved in the biosynthesis of coumarins and furanocoumarins (FCs), natural products required for defense responses against attacks by predators with potential medical and agroindustrial usages such as anticoagulant, rodenticide and artificial vanilla substitutes. Catalyzes the conversion of xanthotoxin into 5-hydroxyxanthotoxin. This is 5-OH-xanthotoxin synthase from Pastinaca sativa (Wild parsnip).